A 66-amino-acid polypeptide reads, in one-letter code: Large ribosomal subunit protein bL31 (66 aa).

Zn(2+)-binding residues include C16, C18, C36, and C39.

This sequence belongs to the bacterial ribosomal protein bL31 family. Type A subfamily. As to quaternary structure, part of the 50S ribosomal subunit. Requires Zn(2+) as cofactor.

Functionally, binds the 23S rRNA. The chain is Large ribosomal subunit protein bL31 from Campylobacter hominis (strain ATCC BAA-381 / DSM 21671 / CCUG 45161 / LMG 19568 / NCTC 13146 / CH001A).